A 208-amino-acid polypeptide reads, in one-letter code: Glutathione S-transferase 1 (208 aa).

A GST N-terminal domain is found at 1–80 (MDFYYLPGSA…YLVEKYGKTD (80 aa)). Glutathione is bound by residues serine 9, 50 to 52 (HTI), and 64 to 66 (ESR). Residues 86–207 (CPKKRAVINQ…AGCLEFKKYF (122 aa)) form the GST C-terminal domain.

The protein belongs to the GST superfamily. Theta family. In terms of assembly, homodimer.

It catalyses the reaction RX + glutathione = an S-substituted glutathione + a halide anion + H(+). In terms of biological role, conjugation of reduced glutathione to a wide number of exogenous and endogenous hydrophobic electrophiles. The polypeptide is Glutathione S-transferase 1 (Gst1) (Musca domestica (House fly)).